The chain runs to 426 residues: Riboflavin biosynthesis protein PYRD, chloroplastic (426 aa).

A chloroplast-targeting transit peptide spans 1 to 61 (MQISCLPISI…SQTGFSNPVL (61 aa)). One can recognise a CMP/dCMP-type deaminase domain in the interval 72–194 (VDDSFYMRKC…RLKDAGIDVT (123 aa)). Residue H121 coordinates Zn(2+). The active-site Proton donor is the E123. C146 and C155 together coordinate Zn(2+).

Zn(2+) serves as cofactor.

It localises to the plastid. It is found in the chloroplast. It carries out the reaction 2,5-diamino-6-hydroxy-4-(5-phosphoribosylamino)-pyrimidine + H2O + H(+) = 5-amino-6-(5-phospho-D-ribosylamino)uracil + NH4(+). It participates in cofactor biosynthesis; riboflavin biosynthesis; 5-amino-6-(D-ribitylamino)uracil from GTP: step 2/4. Functionally, monofunctional pyrimidine deaminase involved in the riboflavin biosynthesis pathway. Also has a reductase domain that lacks catalytically essential substrate-binding residues. The protein is Riboflavin biosynthesis protein PYRD, chloroplastic (PYRD) of Arabidopsis thaliana (Mouse-ear cress).